The following is a 664-amino-acid chain: UvrABC system protein B (664 aa).

One can recognise a Helicase ATP-binding domain in the interval 25 to 412 (KGLVSGLTDQ…LQVVEQLVRP (388 aa)). Residue 38-45 (GVTGSGKT) participates in ATP binding. The Beta-hairpin signature appears at 91-114 (YYDYYQPEAYVPQKDMYIEKDSDI). The 167-residue stretch at 428–594 (QIDDLLEEVK…GIRKAIKDIN (167 aa)) folds into the Helicase C-terminal domain. The region spanning 620–655 (ARLIKELESQMKKAAKNLEFERAALIRDRVVELRAA) is the UVR domain.

It belongs to the UvrB family. In terms of assembly, forms a heterotetramer with UvrA during the search for lesions. Interacts with UvrC in an incision complex.

It is found in the cytoplasm. In terms of biological role, the UvrABC repair system catalyzes the recognition and processing of DNA lesions. A damage recognition complex composed of 2 UvrA and 2 UvrB subunits scans DNA for abnormalities. Upon binding of the UvrA(2)B(2) complex to a putative damaged site, the DNA wraps around one UvrB monomer. DNA wrap is dependent on ATP binding by UvrB and probably causes local melting of the DNA helix, facilitating insertion of UvrB beta-hairpin between the DNA strands. Then UvrB probes one DNA strand for the presence of a lesion. If a lesion is found the UvrA subunits dissociate and the UvrB-DNA preincision complex is formed. This complex is subsequently bound by UvrC and the second UvrB is released. If no lesion is found, the DNA wraps around the other UvrB subunit that will check the other stand for damage. The protein is UvrABC system protein B of Dehalococcoides mccartyi (strain CBDB1).